Reading from the N-terminus, the 446-residue chain is N-succinylarginine dihydrolase (446 aa).

Substrate contacts are provided by residues 19–28, Asn110, and 137–138; these read AGLSFGNEAS and HR. Glu174 is an active-site residue. Substrate is bound at residue Arg213. Residue His249 is part of the active site. Positions 251 and 364 each coordinate substrate. Residue Cys370 is the Nucleophile of the active site.

This sequence belongs to the succinylarginine dihydrolase family. In terms of assembly, homodimer.

It carries out the reaction N(2)-succinyl-L-arginine + 2 H2O + 2 H(+) = N(2)-succinyl-L-ornithine + 2 NH4(+) + CO2. It participates in amino-acid degradation; L-arginine degradation via AST pathway; L-glutamate and succinate from L-arginine: step 2/5. Catalyzes the hydrolysis of N(2)-succinylarginine into N(2)-succinylornithine, ammonia and CO(2). This chain is N-succinylarginine dihydrolase, found in Acinetobacter baylyi (strain ATCC 33305 / BD413 / ADP1).